Here is a 266-residue protein sequence, read N- to C-terminus: ATG8-interacting protein 2 (266 aa).

The AIM (Atg8-family-interacting motif) signature appears at 14–17 (WEVV). The helical transmembrane segment at 191-210 (TNTVWSICIAAAVMGIVILG) threads the bilayer. Residues 218-221 (WQIL) carry the AIM (Atg8-family-interacting motif) motif.

In terms of assembly, interacts with ATG8F.

The protein resides in the endoplasmic reticulum membrane. It is found in the membrane. Its function is as follows. May be involved in salt stress-induced vesicle-to-vacuole trafficking pathway. Through its interaction with ATG8F, may enable delivery of the vesicle bodies to the vacuole by an autophagic pathway. Plays a role in seed germination in response to exogenous abscisic acid (ABA) treatment. This Arabidopsis thaliana (Mouse-ear cress) protein is ATG8-interacting protein 2.